Consider the following 326-residue polypeptide: Ketol-acid reductoisomerase (NADP(+)) (326 aa).

Positions A2–T182 constitute a KARI N-terminal Rossmann domain. Residues Y25–Q28, R48, S53, and D83–Q86 contribute to the NADP(+) site. H108 is a catalytic residue. G134 contacts NADP(+). Residues T183–E325 enclose the KARI C-terminal knotted domain. Positions 191, 195, 227, and 231 each coordinate Mg(2+). S252 serves as a coordination point for substrate.

It belongs to the ketol-acid reductoisomerase family. Requires Mg(2+) as cofactor.

The catalysed reaction is (2R)-2,3-dihydroxy-3-methylbutanoate + NADP(+) = (2S)-2-acetolactate + NADPH + H(+). The enzyme catalyses (2R,3R)-2,3-dihydroxy-3-methylpentanoate + NADP(+) = (S)-2-ethyl-2-hydroxy-3-oxobutanoate + NADPH + H(+). Its pathway is amino-acid biosynthesis; L-isoleucine biosynthesis; L-isoleucine from 2-oxobutanoate: step 2/4. The protein operates within amino-acid biosynthesis; L-valine biosynthesis; L-valine from pyruvate: step 2/4. In terms of biological role, involved in the biosynthesis of branched-chain amino acids (BCAA). Catalyzes an alkyl-migration followed by a ketol-acid reduction of (S)-2-acetolactate (S2AL) to yield (R)-2,3-dihydroxy-isovalerate. In the isomerase reaction, S2AL is rearranged via a Mg-dependent methyl migration to produce 3-hydroxy-3-methyl-2-ketobutyrate (HMKB). In the reductase reaction, this 2-ketoacid undergoes a metal-dependent reduction by NADPH to yield (R)-2,3-dihydroxy-isovalerate. The polypeptide is Ketol-acid reductoisomerase (NADP(+)) (Methanopyrus kandleri (strain AV19 / DSM 6324 / JCM 9639 / NBRC 100938)).